The chain runs to 337 residues: Oligopeptide transport ATP-binding protein OppD (337 aa).

The ABC transporter domain maps to 20–269 (LNVKDLRVTF…PVHPYSIGLL (250 aa)). 56 to 63 (GESGSGKS) provides a ligand contact to ATP.

It belongs to the ABC transporter superfamily. As to quaternary structure, the complex is composed of two ATP-binding proteins (OppD and OppF), two transmembrane proteins (OppB and OppC) and a solute-binding protein (OppA or MppA).

The protein localises to the cell inner membrane. The catalysed reaction is a [peptide](out) + ATP + H2O = a [peptide](in) + ADP + phosphate + H(+). It catalyses the reaction L-alanyl-gamma-D-glutamyl-meso-2,6-diaminopimelate(out) + ATP + H2O = L-alanyl-gamma-D-glutamyl-meso-2,6-diaminopimelate(in) + ADP + phosphate + H(+). In terms of biological role, part of the ABC transporter complex OppABCDF involved in the uptake of oligopeptides and of the ABC transporter complex MppA-OppBCDF involved in the uptake of the cell wall murein tripeptide L-alanyl-gamma-D-glutamyl-meso-diaminopimelate. Probably responsible for energy coupling to the transport system. Plays an important nutritional role and is involved in the recycling of cell wall peptides. The protein is Oligopeptide transport ATP-binding protein OppD (oppD) of Escherichia coli (strain K12).